Reading from the N-terminus, the 430-residue chain is GTPase Obg (430 aa).

The Obg domain occupies 1–158 (MFIDKAKIYL…LTVVLELKLI (158 aa)). One can recognise an OBG-type G domain in the interval 159–330 (ADVGLVGFPN…LLSYVSKRLK (172 aa)). Residues 165–172 (GFPNVGKS), 190–194 (FTTLT), 212–215 (DIPG), 282–285 (NKTD), and 311–313 (SAA) each bind GTP. Mg(2+) contacts are provided by Ser-172 and Thr-192. In terms of domain architecture, OCT spans 351 to 430 (KYEETEDKYH…MYSVEFEYFN (80 aa)).

Belongs to the TRAFAC class OBG-HflX-like GTPase superfamily. OBG GTPase family. In terms of assembly, monomer. It depends on Mg(2+) as a cofactor.

It is found in the cytoplasm. Functionally, an essential GTPase which binds GTP, GDP and possibly (p)ppGpp with moderate affinity, with high nucleotide exchange rates and a fairly low GTP hydrolysis rate. Plays a role in control of the cell cycle, stress response, ribosome biogenesis and in those bacteria that undergo differentiation, in morphogenesis control. The chain is GTPase Obg from Alkaliphilus oremlandii (strain OhILAs) (Clostridium oremlandii (strain OhILAs)).